Here is a 1255-residue protein sequence, read N- to C-terminus: Stress response protein NST1 (1255 aa).

A compositionally biased stretch (pro residues) spans 1 to 19 (MKGNRNPPPPPSGPVPPSP). Disordered regions lie at residues 1–214 (MKGN…SQEE), 285–379 (NHPN…SEEL), 470–525 (RAYD…RMEE), 563–898 (EAEN…PPMG), and 956–1080 (HPPP…PPFG). The span at 50 to 61 (PSPTASSLAAKP) shows a compositional bias: low complexity. The span at 76–86 (NRKKQKRRAKA) shows a compositional bias: basic residues. Low complexity predominate over residues 87-96 (AAKAAAERAQ). Positions 118-127 (ADPEDDEDEP) are enriched in acidic residues. Positions 151–162 (KSKKSKKKKKKN) are enriched in basic residues. A compositionally biased stretch (pro residues) spans 187 to 196 (PILPPPPPQQ). A compositionally biased stretch (basic and acidic residues) spans 201-214 (MSREKIWNTNSQEE). The segment covering 330-376 (ELEGDEEEEEVEAEAEDDGEGDEEGEDVYSEDELEDDMYSEEEQEPS) has biased composition (acidic residues). A compositionally biased stretch (basic and acidic residues) spans 470–481 (RAYDHPNGERYV). Residues 488–518 (PDEEEFEDEEEEYEEDDEEEYNSPDEEDTMT) are compositionally biased toward acidic residues. Residues 547–745 (REKVAKERQA…ERRKKEERAA (199 aa)) are a coiled coil. 2 stretches are compositionally biased toward basic and acidic residues: residues 590-630 (KKEA…AEEK) and 637-745 (QRKA…ERAA). A compositionally biased stretch (pro residues) spans 770–780 (PPAPPVAPVPV). The segment covering 811-835 (QTSQQDGSTASSGAASNSGSMASQN) has biased composition (low complexity). Polar residues-rich tracts occupy residues 865 to 877 (QGSA…SASP) and 983 to 1004 (RDNQ…QPIS). Positions 1067–1080 (GPRPAPGFPMPPFG) are enriched in pro residues.

Belongs to the NST1 family.

It is found in the cytoplasm. In terms of biological role, may act as a negative regulator of salt tolerance. The sequence is that of Stress response protein NST1 (NST1) from Chaetomium globosum (strain ATCC 6205 / CBS 148.51 / DSM 1962 / NBRC 6347 / NRRL 1970) (Soil fungus).